A 38-amino-acid polypeptide reads, in one-letter code: Photosystem II reaction center protein L (38 aa).

The helical transmembrane segment at 17-37 (SLYWGLLLIFVLAVLFSSYFF) threads the bilayer.

It belongs to the PsbL family. PSII is composed of 1 copy each of membrane proteins PsbA, PsbB, PsbC, PsbD, PsbE, PsbF, PsbH, PsbI, PsbJ, PsbK, PsbL, PsbM, PsbT, PsbX, PsbY, PsbZ, Psb30/Ycf12, at least 3 peripheral proteins of the oxygen-evolving complex and a large number of cofactors. It forms dimeric complexes.

The protein resides in the plastid. Its subcellular location is the chloroplast thylakoid membrane. Functionally, one of the components of the core complex of photosystem II (PSII). PSII is a light-driven water:plastoquinone oxidoreductase that uses light energy to abstract electrons from H(2)O, generating O(2) and a proton gradient subsequently used for ATP formation. It consists of a core antenna complex that captures photons, and an electron transfer chain that converts photonic excitation into a charge separation. This subunit is found at the monomer-monomer interface and is required for correct PSII assembly and/or dimerization. In Ephedra sinica (Chinese ephedra), this protein is Photosystem II reaction center protein L.